A 299-amino-acid polypeptide reads, in one-letter code: tRNA dimethylallyltransferase (299 aa).

Residue 22 to 29 coordinates ATP; that stretch reads GPTASGKT. 24–29 serves as a coordination point for substrate; sequence TASGKT. Interaction with substrate tRNA stretches follow at residues 47 to 50 and 172 to 176; these read DSRQ and QRLLR.

Belongs to the IPP transferase family. As to quaternary structure, monomer. It depends on Mg(2+) as a cofactor.

The enzyme catalyses adenosine(37) in tRNA + dimethylallyl diphosphate = N(6)-dimethylallyladenosine(37) in tRNA + diphosphate. In terms of biological role, catalyzes the transfer of a dimethylallyl group onto the adenine at position 37 in tRNAs that read codons beginning with uridine, leading to the formation of N6-(dimethylallyl)adenosine (i(6)A). In Endomicrobium trichonymphae, this protein is tRNA dimethylallyltransferase.